We begin with the raw amino-acid sequence, 288 residues long: Stage IV sporulation protein FB (288 aa).

The Mother cell cytoplasmic segment spans residues methionine 1 to lysine 10. The chain crosses the membrane as a helical span at residues isoleucine 11–methionine 30. A topological domain (forespore intermembrane space) is located at residue lysine 31. A helical membrane pass occupies residues alanine 32–tryptophan 56. Histidine 43 contacts Zn(2+). Glutamate 44 is a catalytic residue. Histidine 47 is a Zn(2+) binding site. Over arginine 57–glutamate 83 the chain is Mother cell cytoplasmic. Residues phenylalanine 84–alanine 105 traverse the membrane as a helical segment. Over glutamate 106–leucine 126 the chain is Forespore intermembrane space. A helical transmembrane segment spans residues phenylalanine 127–phenylalanine 146. Zn(2+) is bound at residue aspartate 137. Topologically, residues serine 147–lysine 161 are mother cell cytoplasmic. A helical transmembrane segment spans residues threonine 162–isoleucine 178. Position 179 (proline 179) is a topological domain, forespore intermembrane space. The chain crosses the membrane as a helical span at residues leucine 180–tyrosine 199. Over arginine 200–tyrosine 288 the chain is Mother cell cytoplasmic.

It belongs to the peptidase M50B family. In terms of assembly, forms a complex with SpoIVFA and BofA localized in the mother-cell membrane surrounding the forespore. Requires Zn(2+) as cofactor.

Its subcellular location is the forespore outer membrane. Functionally, implicated in the coupling of mother cell to forespore gene expression. Required for spore formation. Processes the pro-sigma K factor. The sequence is that of Stage IV sporulation protein FB (spoIVFB) from Bacillus subtilis (strain 168).